Consider the following 930-residue polypeptide: Translation initiation factor IF-2 (930 aa).

The disordered stretch occupies residues 31–317 (FVKSASSTVE…RKSKRAKRAE (287 aa)). The span at 61-78 (PAAGASNGAPAKPSAPGA) shows a compositional bias: low complexity. Pro residues-rich tracts occupy residues 79–99 (RPGPRPGPPAPAQPKEPPAPA) and 108–120 (PAAPAPPAAPPAP). Low complexity predominate over residues 121–135 (AASAAPPSAPEAPSA). Pro residues-rich tracts occupy residues 136-158 (RPTPGPRPGPGGPKPGAPKPAPR) and 178-192 (PRPQGPAGPGGPRPG). A compositionally biased stretch (gly residues) spans 193 to 205 (PGAGGPRPGGGPR). Positions 212–242 (NMPPRPVGGPRPGGGPRPGGGPRPGAGPRPT) are enriched in pro residues. Residues 244 to 301 (GGAGRPGGGGGGNYRGGGAGGGGGAGGAAAGGFRGRPGGGGGRPGQRGGAAGAFGRPG) show a composition bias toward gly residues. A compositionally biased stretch (basic residues) spans 305–314 (KRGRKSKRAK). The tr-type G domain maps to 426 to 598 (FRPPVVTVMG…VVLTADASLD (173 aa)). A G1 region spans residues 435–442 (GHVDHGKT). 435–442 (GHVDHGKT) is a binding site for GTP. The interval 460-464 (GITQH) is G2. The G3 stretch occupies residues 485 to 488 (DTPG). Residues 485–489 (DTPGH) and 539–542 (NKID) contribute to the GTP site. Residues 539-542 (NKID) form a G4 region. The G5 stretch occupies residues 575–577 (SAK).

The protein belongs to the TRAFAC class translation factor GTPase superfamily. Classic translation factor GTPase family. IF-2 subfamily.

Its subcellular location is the cytoplasm. Functionally, one of the essential components for the initiation of protein synthesis. Protects formylmethionyl-tRNA from spontaneous hydrolysis and promotes its binding to the 30S ribosomal subunits. Also involved in the hydrolysis of GTP during the formation of the 70S ribosomal complex. This chain is Translation initiation factor IF-2, found in Mycolicibacterium gilvum (strain PYR-GCK) (Mycobacterium gilvum (strain PYR-GCK)).